The sequence spans 244 residues: Protein-lysine methyltransferase METTL21E (244 aa).

Residues 1–20 form a disordered region; sequence MDLTVTHITHKETYKEPRDD. Residues 9–18 are compositionally biased toward basic and acidic residues; the sequence is THKETYKEPR. S-adenosyl-L-methionine-binding positions include W69, 97–99, D118, W149, and A170; that span reads GAG.

Belongs to the methyltransferase superfamily. METTL21 family.

Functionally, protein-lysine methyltransferase. In Mus musculus (Mouse), this protein is Protein-lysine methyltransferase METTL21E (Mettl21e).